Reading from the N-terminus, the 1382-residue chain is MWKTLGRVEQLLPYASLILRNREVLFREPKRGIDEYLENDSFFQMIPVKYREIVLPKLRRDTNKMTAALKNKVAVAIDELTVPLMWMIHFAVGYPYRYPELQLLAFAGPQRNVYVDDTTRRIQLYTDYNKNGSSEPRLKTLDGLTSDYVFYFVTVLRQMQICALGNSYDAFNHDPWMDVVGFEDPDQVTNRDISRIVLYSYMFLNTAKGCLVEYATFRQYMRELPKNAPQKLNFREMRQGLIALGRHCVGSRFETDLYESATSELMANHSVQTGRNIYGVDSFSLTSVSGTTATLLQERASERWIQWLGLESDYHCSFSSTRNAEDVVAGEAASSDHHQKISRVTRKRPREPKSTNDILVAGRKLFGSSFEFRDLHQLRLCHEIYMADTPSVAVQAPPGYGKTELFHLPLIALASKGDVKYVSFLFVPYTVLLANCMIRLSRCGCLNVAPVRNFIEEGCDGVTDLYVGIYDDLASTNFTDRIAAWENIVECTFRTNNVKLGYLIVDEFHNFETEVYRQSQFGGITNLDFDAFEKAIFLSGTAPEAVADAALQRIGLTGLAKKSMDINELKRSEDLSRGLSSYPTRMFNLIKEKSEVPLGHVHKIWKKVESQPEEALKLLLALFEIEPESKAIVVASTTNEVEELACSWRKYFRVVWIHGKLGAAEKVSRTKEFVTDGSMRVLIGTKLVTEGIDIKQLMMVIMLDNRLNIIELIQGVGRLRDGGLCYLLSRKNSWAARNRKGELPPIKEGCITEQVREFYGLESKKGKKGQHVGCCGSRTDLSADTVELIERMDRLAEKQATASMSIIALPSSFQESNSSDRCRKYCSSDEDSDTCIHGSANASTNATTNSSTNATTTASTNVRTSATTTASINVRTSAITTESTNSSTNATTTASTNVRTSATTTASINVRTSATTTESTNSNTSATTTESTDSNTSATTTESTDSNTSATTTASTNSSTNATTTASTNSSTNATTTESTNASAKEDANKDGNAEDNRFHPVTDINKESYKRKGSQMVLLERKKLKAQFPNTSENMNVLQFLGFRSDEIKHLFLYGIDVYFCPEGVFTQYGLCKGCQKMFELCVCWAGQKVSYRRMAWEALAVERMLRNDEEYKEYLEDIEPYHGDPVGYLKYFSVKRGEIYSQIQRNYAWYLAITRRRETISVLDSTRGKQGSQVFRMSGRQIKELYYKVWSNLRESKTEVLQYFLNWDEKKCREEWEAKDDTVFVEALEKVGVFQRLRSMTSAGLQGPQYVKLQFSRHHRQLRSRYELSLGMHLRDQLALGVTPSKVPHWTAFLSMLIGLFYNKTFRQKLEYLLEQISEVWLLPHWLDLANVEVLAADNTRVPLYMLMVAVHKELDSDDVPDGRFDIILLCRDSSREVGE.

In terms of domain architecture, Helicase ATP-binding spans 383–560 (EIYMADTPSV…LQRIGLTGLA (178 aa)). Position 396 to 403 (396 to 403 (APPGYGKT)) interacts with ATP. The 150-residue stretch at 617 to 766 (KLLLALFEIE…EFYGLESKKG (150 aa)) folds into the Helicase C-terminal domain. Disordered regions lie at residues 840–864 (ANASTNATTNSSTNATTTASTNVRT) and 880–1007 (TTES…DINK). Low complexity predominate over residues 880–983 (TTESTNSSTN…ATTTESTNAS (104 aa)). Over residues 984–1007 (AKEDANKDGNAEDNRFHPVTDINK) the composition is skewed to basic and acidic residues.

The protein belongs to the helicase family. Yeast subtelomeric Y' repeat subfamily.

Functionally, catalyzes DNA unwinding and is involved in telomerase-independent telomere maintenance. The chain is Y' element ATP-dependent helicase protein 1 copy 4 (YRF1-4) from Saccharomyces cerevisiae (strain ATCC 204508 / S288c) (Baker's yeast).